Here is a 170-residue protein sequence, read N- to C-terminus: Crossover junction endodeoxyribonuclease RuvC (170 aa).

Active-site residues include Asp11, Glu71, and Asp143. Mg(2+)-binding residues include Asp11, Glu71, and Asp143.

Belongs to the RuvC family. Homodimer which binds Holliday junction (HJ) DNA. The HJ becomes 2-fold symmetrical on binding to RuvC with unstacked arms; it has a different conformation from HJ DNA in complex with RuvA. In the full resolvosome a probable DNA-RuvA(4)-RuvB(12)-RuvC(2) complex forms which resolves the HJ. Mg(2+) is required as a cofactor.

It localises to the cytoplasm. It catalyses the reaction Endonucleolytic cleavage at a junction such as a reciprocal single-stranded crossover between two homologous DNA duplexes (Holliday junction).. Functionally, the RuvA-RuvB-RuvC complex processes Holliday junction (HJ) DNA during genetic recombination and DNA repair. Endonuclease that resolves HJ intermediates. Cleaves cruciform DNA by making single-stranded nicks across the HJ at symmetrical positions within the homologous arms, yielding a 5'-phosphate and a 3'-hydroxyl group; requires a central core of homology in the junction. The consensus cleavage sequence is 5'-(A/T)TT(C/G)-3'. Cleavage occurs on the 3'-side of the TT dinucleotide at the point of strand exchange. HJ branch migration catalyzed by RuvA-RuvB allows RuvC to scan DNA until it finds its consensus sequence, where it cleaves and resolves the cruciform DNA. This is Crossover junction endodeoxyribonuclease RuvC from Sinorhizobium fredii (strain NBRC 101917 / NGR234).